A 239-amino-acid chain; its full sequence is Ribosomal RNA small subunit methyltransferase G (239 aa).

S-adenosyl-L-methionine-binding positions include glycine 79, phenylalanine 84, 130-131 (AE), and arginine 149.

It belongs to the methyltransferase superfamily. RNA methyltransferase RsmG family.

It localises to the cytoplasm. Functionally, specifically methylates the N7 position of a guanine in 16S rRNA. The polypeptide is Ribosomal RNA small subunit methyltransferase G (Pelotomaculum thermopropionicum (strain DSM 13744 / JCM 10971 / SI)).